The chain runs to 138 residues: Beta-galactosidase (138 aa).

The protein belongs to the glycosyl hydrolase 2 family.

It carries out the reaction Hydrolysis of terminal non-reducing beta-D-galactose residues in beta-D-galactosides.. The chain is Beta-galactosidase (lacZ) from Rhizobium radiobacter (Agrobacterium tumefaciens).